The following is a 66-amino-acid chain: Large ribosomal subunit protein uL29 (66 aa).

This sequence belongs to the universal ribosomal protein uL29 family.

The chain is Large ribosomal subunit protein uL29 from Francisella tularensis subsp. tularensis (strain FSC 198).